Here is a 132-residue protein sequence, read N- to C-terminus: Small ribosomal subunit protein eS12 (132 aa).

Ala2 bears the N-acetylalanine mark. Lys129 bears the N6-succinyllysine mark.

The protein belongs to the eukaryotic ribosomal protein eS12 family. Part of the small subunit (SSU) processome, composed of more than 70 proteins and the RNA chaperone small nucleolar RNA (snoRNA) U3. Subunit of the 40S ribosomal complex.

The protein localises to the nucleus. It localises to the nucleolus. Functionally, part of the small subunit (SSU) processome, first precursor of the small eukaryotic ribosomal subunit. During the assembly of the SSU processome in the nucleolus, many ribosome biogenesis factors, an RNA chaperone and ribosomal proteins associate with the nascent pre-rRNA and work in concert to generate RNA folding, modifications, rearrangements and cleavage as well as targeted degradation of pre-ribosomal RNA by the RNA exosome. Subunit of the 40S ribosomal complex. This Rattus norvegicus (Rat) protein is Small ribosomal subunit protein eS12 (Rps12).